The chain runs to 351 residues: Dihydroorotate dehydrogenase (quinone) (351 aa).

Residues 67–71 (AGFDK) and Thr-91 contribute to the FMN site. Lys-71 serves as a coordination point for substrate. 116 to 120 (NAMGF) serves as a coordination point for substrate. Asn-145 and Asn-178 together coordinate FMN. Asn-178 is a substrate binding site. Ser-181 (nucleophile) is an active-site residue. Residue Asn-183 participates in substrate binding. 2 residues coordinate FMN: Lys-214 and Thr-242. Residue 243–244 (NT) participates in substrate binding. Residues Gly-262, Gly-291, and 312-313 (YS) each bind FMN.

Belongs to the dihydroorotate dehydrogenase family. Type 2 subfamily. As to quaternary structure, monomer. FMN serves as cofactor.

The protein resides in the cell membrane. The catalysed reaction is (S)-dihydroorotate + a quinone = orotate + a quinol. Its pathway is pyrimidine metabolism; UMP biosynthesis via de novo pathway; orotate from (S)-dihydroorotate (quinone route): step 1/1. Catalyzes the conversion of dihydroorotate to orotate with quinone as electron acceptor. This is Dihydroorotate dehydrogenase (quinone) from Helicobacter pylori (strain G27).